A 474-amino-acid chain; its full sequence is tRNA modification GTPase MnmE (474 aa).

(6S)-5-formyl-5,6,7,8-tetrahydrofolate-binding residues include R28, E92, and R131. The TrmE-type G domain occupies G227–E395. Residue N237 coordinates K(+). Residues N237–T242, S256–T262, D281–G284, and S376–R378 each bind GTP. S241 contributes to the Mg(2+) binding site. K(+)-binding residues include S256, I258, and T261. Residue T262 participates in Mg(2+) binding. K474 contacts (6S)-5-formyl-5,6,7,8-tetrahydrofolate.

Belongs to the TRAFAC class TrmE-Era-EngA-EngB-Septin-like GTPase superfamily. TrmE GTPase family. As to quaternary structure, homodimer. Heterotetramer of two MnmE and two MnmG subunits. K(+) serves as cofactor.

It localises to the cytoplasm. Exhibits a very high intrinsic GTPase hydrolysis rate. Involved in the addition of a carboxymethylaminomethyl (cmnm) group at the wobble position (U34) of certain tRNAs, forming tRNA-cmnm(5)s(2)U34. The polypeptide is tRNA modification GTPase MnmE (Porphyromonas gingivalis (strain ATCC BAA-308 / W83)).